We begin with the raw amino-acid sequence, 161 residues long: Phosphopantetheine adenylyltransferase (161 aa).

Serine 11 is a binding site for substrate. ATP contacts are provided by residues 11–12 (SF) and histidine 19. The substrate site is built by lysine 43, leucine 75, and arginine 89. ATP is bound by residues 90–92 (GLR), glutamate 100, and 125–131 (YSFISSS).

It belongs to the bacterial CoaD family. In terms of assembly, homohexamer. It depends on Mg(2+) as a cofactor.

The protein resides in the cytoplasm. It catalyses the reaction (R)-4'-phosphopantetheine + ATP + H(+) = 3'-dephospho-CoA + diphosphate. Its pathway is cofactor biosynthesis; coenzyme A biosynthesis; CoA from (R)-pantothenate: step 4/5. In terms of biological role, reversibly transfers an adenylyl group from ATP to 4'-phosphopantetheine, yielding dephospho-CoA (dPCoA) and pyrophosphate. The polypeptide is Phosphopantetheine adenylyltransferase (Staphylococcus carnosus (strain TM300)).